We begin with the raw amino-acid sequence, 253 residues long: MRRLLLLCEYDGTLFAGLQRQGRGLRTVQGELERALPGIGALPKAVAAGRTDAGVHALAMPFHVDVESAIPVEKVPEALNRLLPEDLKVVGAREVAPDFHARKDALWRAYRYRILVRPHPSPLLRHRALWVRRPLDLEAMEEALSLLLGRHNFLGFAKEETRPGERELLEARLQVAEGEAGLEVRLYFRGKSFLRGQVRGMVGTLLEVGLGKRPPESLKAILKTADRRLAGPTAPAHGLYFVEAAYPEEKLSP.

The active-site Nucleophile is Asp52. Position 110 (Tyr110) interacts with substrate.

The protein belongs to the tRNA pseudouridine synthase TruA family. Homodimer.

It catalyses the reaction uridine(38/39/40) in tRNA = pseudouridine(38/39/40) in tRNA. Its function is as follows. Formation of pseudouridine at positions 38, 39 and 40 in the anticodon stem and loop of transfer RNAs. The polypeptide is tRNA pseudouridine synthase A (Thermus thermophilus (strain ATCC BAA-163 / DSM 7039 / HB27)).